Here is a 199-residue protein sequence, read N- to C-terminus: Probable GTP-binding protein EngB (199 aa).

In terms of domain architecture, EngB-type G spans 28–199 (DLPEIALAGR…DSWDAILEQV (172 aa)). GTP contacts are provided by residues 36-43 (GRSNVGKS), 63-67 (GKTQL), 81-84 (DVPG), 148-151 (TKAD), and 180-182 (FSS). Mg(2+)-binding residues include Ser43 and Thr65.

This sequence belongs to the TRAFAC class TrmE-Era-EngA-EngB-Septin-like GTPase superfamily. EngB GTPase family. It depends on Mg(2+) as a cofactor.

In terms of biological role, necessary for normal cell division and for the maintenance of normal septation. In Streptococcus pyogenes serotype M18 (strain MGAS8232), this protein is Probable GTP-binding protein EngB.